Reading from the N-terminus, the 473-residue chain is Dynein axonemal assembly factor 11 (473 aa).

4 LRR repeats span residues 22-43 (SLEELSLHQQEIERLEHIDKWC), 45-66 (DLKILYLQNNLIGKIENVSKLK), 67-88 (KLEYLNLALNNIERIENLEGCE), and 89-110 (WLTKLDLTVNFIGELSSVKTLT). The 39-residue stretch at 123–161 (NPCADFDGYRQFVVVTLQQLKWLDGKEIERSERIQALQN) folds into the LRRCT domain. Positions 153–205 (SERIQALQNYTSVEQQIREQEKAYCLRRAKEKEEAQRKLEEENESEDKKKSST) form a coiled coil. Basic and acidic residues-rich tracts occupy residues 188-202 (QRKLEEENESEDKKK) and 273-283 (EKQRKAQDKLS). Disordered stretches follow at residues 188–244 (QRKL…TKES), 273–292 (EKQRKAQDKLSEKKKKAKPP), and 387–473 (VGEM…PPLI). Residues 305-402 (VNEAKLDFSL…GGQRTPTSVK (98 aa)) enclose the CS domain. Residues 397-408 (TPTSVKTTSTSS) are compositionally biased toward low complexity. The segment covering 417 to 431 (KQIERLEVDPSKHSC) has biased composition (basic and acidic residues). Residues 456-467 (PSEEDPDFEDNP) show a composition bias toward acidic residues.

Belongs to the tilB family. In terms of assembly, interacts (via CS domain) with ZMYND10 (via C-terminus). As to expression, mainly expressed in cells with motile cilia. Expressed in epithelial cells of the trachea, testis and ependymal cells of the cerebral ventricles. In testis, abundant expression in late prophase of meiosis I with a dramatic decrease after the first meiotic division (at protein level).

The protein resides in the cytoplasm. Its subcellular location is the cell projection. It localises to the cilium. The protein localises to the dynein axonemal particle. It is found in the flagellum. Its function is as follows. Involved in dynein arm assembly, is important for expression and transporting outer dynein arm (ODA) proteins from the cytoplasm to the cilia. Acts as a crucial component in the formation and motility of spermatozoal flagella. The chain is Dynein axonemal assembly factor 11 (Dnaaf11) from Mus musculus (Mouse).